A 364-amino-acid polypeptide reads, in one-letter code: Aminomethyltransferase (364 aa).

The protein belongs to the GcvT family. As to quaternary structure, the glycine cleavage system is composed of four proteins: P, T, L and H.

The catalysed reaction is N(6)-[(R)-S(8)-aminomethyldihydrolipoyl]-L-lysyl-[protein] + (6S)-5,6,7,8-tetrahydrofolate = N(6)-[(R)-dihydrolipoyl]-L-lysyl-[protein] + (6R)-5,10-methylene-5,6,7,8-tetrahydrofolate + NH4(+). In terms of biological role, the glycine cleavage system catalyzes the degradation of glycine. The protein is Aminomethyltransferase of Shewanella halifaxensis (strain HAW-EB4).